The primary structure comprises 60 residues: Large ribosomal subunit protein bL32 (60 aa).

The disordered stretch occupies residues 1-28 (MAVQQNKKSRSARDMRRSHDALEASTLS). Residues 11–22 (SARDMRRSHDAL) show a composition bias toward basic and acidic residues.

The protein belongs to the bacterial ribosomal protein bL32 family.

In Pseudomonas savastanoi pv. phaseolicola (strain 1448A / Race 6) (Pseudomonas syringae pv. phaseolicola (strain 1448A / Race 6)), this protein is Large ribosomal subunit protein bL32.